The chain runs to 235 residues: MLKLIDITWLYHHLPMRFTLAVERGEQVAILGPSGAGKSTLLNLIAGFLAPASGTLLIAGEDHTLTPPSRRPVSMLFQENNLFSHLNVQQNIGLGLNPGLTLNASQREKRDAIARQMGIESLMTRLPGELSGGQRQRVALARCLVREQPVLLLDEPFSALDPALRQEMLTLVSDICRERQLTLLMVSHSVEDAARIAPRSIVVADGRIAWQGKTDELLSGQASASALLGIKSHIL.

The ABC transporter domain maps to 2-230 (LKLIDITWLY…QASASALLGI (229 aa)). Residue 32–39 (GPSGAGKS) participates in ATP binding.

Belongs to the ABC transporter superfamily. Thiamine importer (TC 3.A.1.19.1) family. The complex is composed of two ATP-binding proteins (ThiQ), two transmembrane proteins (ThiP) and a solute-binding protein (ThiB).

It localises to the cell inner membrane. The enzyme catalyses thiamine(out) + ATP + H2O = thiamine(in) + ADP + phosphate + H(+). Part of the ABC transporter complex ThiBPQ involved in thiamine import. Responsible for energy coupling to the transport system. This Salmonella paratyphi A (strain ATCC 9150 / SARB42) protein is Thiamine import ATP-binding protein ThiQ.